A 314-amino-acid polypeptide reads, in one-letter code: 4-hydroxy-3-methylbut-2-enyl diphosphate reductase (314 aa).

C12 is a [4Fe-4S] cluster binding site. (2E)-4-hydroxy-3-methylbut-2-enyl diphosphate contacts are provided by H43 and H81. Positions 43 and 81 each coordinate dimethylallyl diphosphate. Residues H43 and H81 each coordinate isopentenyl diphosphate. C103 serves as a coordination point for [4Fe-4S] cluster. H131 serves as a coordination point for (2E)-4-hydroxy-3-methylbut-2-enyl diphosphate. H131 lines the dimethylallyl diphosphate pocket. H131 contributes to the isopentenyl diphosphate binding site. E133 acts as the Proton donor in catalysis. (2E)-4-hydroxy-3-methylbut-2-enyl diphosphate is bound at residue T170. C198 contacts [4Fe-4S] cluster. Residues S226, N228, and S271 each coordinate (2E)-4-hydroxy-3-methylbut-2-enyl diphosphate. Dimethylallyl diphosphate-binding residues include S226, N228, and S271. The isopentenyl diphosphate site is built by S226, N228, and S271.

Belongs to the IspH family. Requires [4Fe-4S] cluster as cofactor.

The catalysed reaction is isopentenyl diphosphate + 2 oxidized [2Fe-2S]-[ferredoxin] + H2O = (2E)-4-hydroxy-3-methylbut-2-enyl diphosphate + 2 reduced [2Fe-2S]-[ferredoxin] + 2 H(+). It carries out the reaction dimethylallyl diphosphate + 2 oxidized [2Fe-2S]-[ferredoxin] + H2O = (2E)-4-hydroxy-3-methylbut-2-enyl diphosphate + 2 reduced [2Fe-2S]-[ferredoxin] + 2 H(+). The protein operates within isoprenoid biosynthesis; dimethylallyl diphosphate biosynthesis; dimethylallyl diphosphate from (2E)-4-hydroxy-3-methylbutenyl diphosphate: step 1/1. Its pathway is isoprenoid biosynthesis; isopentenyl diphosphate biosynthesis via DXP pathway; isopentenyl diphosphate from 1-deoxy-D-xylulose 5-phosphate: step 6/6. In terms of biological role, catalyzes the conversion of 1-hydroxy-2-methyl-2-(E)-butenyl 4-diphosphate (HMBPP) into a mixture of isopentenyl diphosphate (IPP) and dimethylallyl diphosphate (DMAPP). Acts in the terminal step of the DOXP/MEP pathway for isoprenoid precursor biosynthesis. In Bacillus velezensis (strain DSM 23117 / BGSC 10A6 / LMG 26770 / FZB42) (Bacillus amyloliquefaciens subsp. plantarum), this protein is 4-hydroxy-3-methylbut-2-enyl diphosphate reductase.